The following is a 101-amino-acid chain: Phosphoribosyl-AMP cyclohydrolase (101 aa).

Asp71 serves as a coordination point for Mg(2+). Cys72 is a Zn(2+) binding site. Mg(2+)-binding residues include Asp73 and Asp75. Zn(2+) is bound by residues Cys88 and Cys95.

Belongs to the PRA-CH family. In terms of assembly, homodimer. Requires Mg(2+) as cofactor. Zn(2+) is required as a cofactor.

It is found in the cytoplasm. It carries out the reaction 1-(5-phospho-beta-D-ribosyl)-5'-AMP + H2O = 1-(5-phospho-beta-D-ribosyl)-5-[(5-phospho-beta-D-ribosylamino)methylideneamino]imidazole-4-carboxamide. It participates in amino-acid biosynthesis; L-histidine biosynthesis; L-histidine from 5-phospho-alpha-D-ribose 1-diphosphate: step 3/9. Functionally, catalyzes the hydrolysis of the adenine ring of phosphoribosyl-AMP. This Bacillus cytotoxicus (strain DSM 22905 / CIP 110041 / 391-98 / NVH 391-98) protein is Phosphoribosyl-AMP cyclohydrolase.